A 428-amino-acid polypeptide reads, in one-letter code: Keratin, type I cytoskeletal 18-A (428 aa).

The segment at 2–78 (SSSRSVYSSS…NVNLFGGVQN (77 aa)) is head. The tract at residues 24-45 (SAPRFTPGSSAASVHAGAGGSG) is disordered. The segment at 79 to 114 (EKETMQDLNDRLASYLERVRSLESANKKLEVQIRQH) is coil 1A. The 311-residue stretch at 79–389 (EKETMQDLND…RLLEGDSFDL (311 aa)) folds into the IF rod domain. Residues 115–130 (TEKKGPAKDWSPYYMT) are linker 1. Residues 131 to 222 (IEDLKKQVFN…KNHQDDVNEL (92 aa)) form a coil 1B region. The interval 223–246 (QAQIASSAVTVEVDAPKSQDLGKI) is linker 12. The tract at residues 247 to 384 (MADLRAQYDE…IQTYRRLLEG (138 aa)) is coil 2. A tail region spans residues 385-428 (DSFDLQDAVPVVTTQTVKKVITTTQRLVDGKVVAESNNTEVIKS).

It belongs to the intermediate filament family. Heterotetramer of two type I and two type II keratins. Keratin-18 associates with keratin-8. Proteolytically cleaved by caspases during epithelial cell apoptosis. As to expression, expressed at high levels in notochord and low levels in adult liver.

In terms of biological role, when phosphorylated, plays a role in filament reorganization. The chain is Keratin, type I cytoskeletal 18-A (krt18-a) from Xenopus laevis (African clawed frog).